We begin with the raw amino-acid sequence, 513 residues long: Dentin matrix acidic phosphoprotein 1 (513 aa).

The first 16 residues, 1–16 (MKISILLMFLWGLSCA), serve as a signal peptide directing secretion. A disordered region spans residues 23 to 513 (QNNESEDSEE…QDDNDCQDGY (491 aa)). Asn25 is a glycosylation site (N-linked (GlcNAc...) asparagine). Residues 46 to 60 (ESSESSEGSKVSSEE) are compositionally biased toward low complexity. Over residues 101–119 (DKDDDEDDSGDDTFGDDDS) the composition is skewed to acidic residues. The segment covering 143–162 (TIQASEESAPQGQDSAQDTT) has biased composition (polar residues). Residues 163–180 (SESRELDNEDRVDSKPEG) show a composition bias toward basic and acidic residues. Positions 208–220 (SELDDEGMQSDDP) are enriched in acidic residues. Residues 245 to 257 (NSEQANTQDSGGS) are compositionally biased toward polar residues. Positions 275–287 (EEDDRSELDDNNT) are enriched in acidic residues. The N-linked (GlcNAc...) asparagine glycan is linked to Asn285. Residues 296-307 (TENSNSRDTGLS) are compositionally biased toward polar residues. Residues 309-325 (PRRDSKGDSQEDSKENL) are compositionally biased toward basic and acidic residues. 3 N-linked (GlcNAc...) asparagine glycosylation sites follow: Asn324, Asn345, and Asn351. Positions 337–354 (SSESSQEANLSSQENSSE) are enriched in low complexity. The Cell attachment site motif lies at 364–366 (RGD). Residues 376 to 386 (EDQEDSDSSEE) are compositionally biased toward acidic residues. N-linked (GlcNAc...) asparagine glycosylation is found at Asn413 and Asn426. Over residues 417-426 (ESPESPEDEN) the composition is skewed to acidic residues. Over residues 427 to 442 (SSSQEGLQSHSSSAES) the composition is skewed to low complexity. A glycan (N-linked (GlcNAc...) asparagine) is linked at Asn467. Residues 484 to 502 (IEIESRKLTVDAYHNKPIG) are compositionally biased toward basic and acidic residues. Over residues 503-513 (DQDDNDCQDGY) the composition is skewed to acidic residues.

Interacts with importin alpha. Post-translationally, phosphorylated in the cytosol and extracellular matrix and unphosphorylated in the nucleus. Phosphorylation is necessary for nucleocytoplasmic transport and may be catalyzed by a nuclear isoform of CK2 and can be augmented by calcium. Phosphorylated (in vitro) by FAM20C in the extracellular medium at sites within the S-x-E/pS motif. Expressed in tooth particularly in odontoblast, ameloblast and cementoblast.

The protein resides in the nucleus. Its subcellular location is the cytoplasm. It is found in the secreted. It localises to the extracellular space. The protein localises to the extracellular matrix. May have a dual function during osteoblast differentiation. In the nucleus of undifferentiated osteoblasts, unphosphorylated form acts as a transcriptional component for activation of osteoblast-specific genes like osteocalcin. During the osteoblast to osteocyte transition phase it is phosphorylated and exported into the extracellular matrix, where it regulates nucleation of hydroxyapatite. The sequence is that of Dentin matrix acidic phosphoprotein 1 (DMP1) from Homo sapiens (Human).